We begin with the raw amino-acid sequence, 1002 residues long: Hypoxia up-regulated protein 1 (1002 aa).

Positions 1–23 are cleaved as a signal peptide; that stretch reads MARAPRWMLGWLLLACCVPHTEP. Disordered stretches follow at residues 576-698 and 918-1002; these read LFGG…PKKQ and KPKP…NDEL. Positions 643-675 are enriched in basic and acidic residues; that stretch reads PPKEESQKNEEGEKSEARDPKEDKETVNEEELS. Over residues 933–947 the composition is skewed to polar residues; sequence GKNATGTSESENTIP. Basic and acidic residues-rich tracts occupy residues 951–962 and 983–1002; these read GKQEEKPEDISP and SSKK…NDEL. Residues 999 to 1002 carry the Prevents secretion from ER motif; that stretch reads NDEL.

It belongs to the heat shock protein 70 family.

Its subcellular location is the endoplasmic reticulum lumen. Its function is as follows. Has a pivotal role in cytoprotective cellular mechanisms triggered by oxygen deprivation. Promotes HSPA5/BiP-mediated ATP nucleotide exchange and thereby activates the unfolded protein response (UPR) pathway in the presence of endoplasmic reticulum stress. May play a role as a molecular chaperone and participate in protein folding. This is Hypoxia up-regulated protein 1 (HYOU1) from Gallus gallus (Chicken).